Here is a 412-residue protein sequence, read N- to C-terminus: MITQLGLTLVVGLTLCLVHVQALLQVPEFPFSVLWNVPSARCKTRFGVHLPLDALGIIANHGQRFHGQNITIFYKNQFGLYPYFGPRGTAHNGGIPQAVSLDHHLAQAAHQILHNLGSSFAGLAVLDWEEWYPLWAGNWGTHRQVYQAASWAWAQQMFPDLNPQEQLHKAQTGFEQAARALMEHTLRLGQMLRPHGLWGFYRYPVCGNGWHNMASNYTGHCHPAIITRNTQLRWLWAASSALFPSIYLPPRLPPAYHQTFVRHRLEEAFRVALTGHAHPLPVLAYVRLTHRSSGRFLSLDDLMQTIGVSAALGAAGVVLWGDLSVSSSEEECWRLHDYLVGTLGPYVINVTKAATACSHQRCHGHGRCSWKDPGQMEAFLHLQPDDNLGAWKSFRCRCYLGWSGPTCLEPKP.

An N-terminal signal peptide occupies residues 1–22 (MITQLGLTLVVGLTLCLVHVQA). 5 disulfides stabilise this stretch: C42–C332, C206–C221, C357–C368, C362–C396, and C398–C407. The N-linked (GlcNAc...) asparagine glycan is linked to N69. E129 (proton donor) is an active-site residue. Residue N216 is glycosylated (N-linked (GlcNAc...) asparagine). Residues 353 to 408 (AATACSHQRCHGHGRCSWKDPGQMEAFLHLQPDDNLGAWKSFRCRCYLGWSGPTCL) form the EGF-like domain.

It belongs to the glycosyl hydrolase 56 family. In terms of processing, N-glycosylated.

The protein resides in the secreted. It is found in the cell membrane. Its subcellular location is the cytoplasmic vesicle. The protein localises to the secretory vesicle. It localises to the acrosome. The protein resides in the endoplasmic reticulum. It is found in the early endosome. The catalysed reaction is Random hydrolysis of (1-&gt;4)-linkages between N-acetyl-beta-D-glucosamine and D-glucuronate residues in hyaluronate.. Facilitates sperm penetration into the layer of cumulus cells surrounding the egg by digesting hyaluronic acid. Involved in induction of the acrosome reaction in the sperm. Involved in follicular atresia, the breakdown of immature ovarian follicles that are not selected to ovulate. Induces ovarian granulosa cell apoptosis, possibly via apoptotic signaling pathway involving CASP8 and CASP3 activation, and poly(ADP-ribose) polymerase (PARP) cleavage. Has no hyaluronidase activity in embryonic fibroblasts in vitro. Has no hyaluronidase activity in granulosa cells in vitro. The polypeptide is Hyaluronidase-3 (Hyal3) (Rattus norvegicus (Rat)).